Consider the following 467-residue polypeptide: Probable glutamate decarboxylase gamma (467 aa).

Lys-278 carries the N6-(pyridoxal phosphate)lysine modification.

Belongs to the group II decarboxylase family. Pyridoxal 5'-phosphate serves as cofactor.

The catalysed reaction is L-glutamate + H(+) = 4-aminobutanoate + CO2. The chain is Probable glutamate decarboxylase gamma from Listeria innocua serovar 6a (strain ATCC BAA-680 / CLIP 11262).